Consider the following 441-residue polypeptide: Histidine--tRNA ligase (441 aa).

This sequence belongs to the class-II aminoacyl-tRNA synthetase family. In terms of assembly, homodimer.

The protein localises to the cytoplasm. It carries out the reaction tRNA(His) + L-histidine + ATP = L-histidyl-tRNA(His) + AMP + diphosphate + H(+). In Synechococcus sp. (strain WH7803), this protein is Histidine--tRNA ligase.